Here is a 577-residue protein sequence, read N- to C-terminus: Thiol:disulfide interchange protein DsbD (577 aa).

Residues 1-23 (MAQRIFTLIFLLWTAVGTPQVAA) form the signal peptide. Cystine bridges form between C131–C137 and C194–C316. Helical transmembrane passes span 182–202 (ALLI…YPLI), 225–245 (YVQG…AAGL), 255–275 (YILI…FGLY), 308–328 (LAGL…LLYI), 338–358 (GGTL…VTLF), 369–389 (WMQY…VFLL), and 396–416 (AWGI…ALML). In terms of domain architecture, Thioredoxin spans 437–577 (VISAKPLQDW…FQAHLQKFSP (141 aa)). An intrachain disulfide couples C492 to C495.

It belongs to the thioredoxin family. DsbD subfamily.

It is found in the cell inner membrane. The enzyme catalyses [protein]-dithiol + NAD(+) = [protein]-disulfide + NADH + H(+). The catalysed reaction is [protein]-dithiol + NADP(+) = [protein]-disulfide + NADPH + H(+). Functionally, required to facilitate the formation of correct disulfide bonds in some periplasmic proteins and for the assembly of the periplasmic c-type cytochromes. Acts by transferring electrons from cytoplasmic thioredoxin to the periplasm. This transfer involves a cascade of disulfide bond formation and reduction steps. The polypeptide is Thiol:disulfide interchange protein DsbD (Pectobacterium atrosepticum (strain SCRI 1043 / ATCC BAA-672) (Erwinia carotovora subsp. atroseptica)).